Reading from the N-terminus, the 344-residue chain is Palmitoyltransferase ZDHHC4 (344 aa).

The Lumenal segment spans residues Met-1–Asp-2. Residues Phe-3–Val-23 traverse the membrane as a helical segment. Residues Cys-24–Thr-67 lie on the Cytoplasmic side of the membrane. Residues Phe-68–Phe-88 form a helical membrane-spanning segment. Topologically, residues Gly-89 to His-99 are lumenal. A helical membrane pass occupies residues Tyr-100 to Gly-120. Residues Thr-121–Arg-192 are Cytoplasmic-facing. A DHHC domain is found at Val-149–Leu-199. The active-site S-palmitoyl cysteine intermediate is the Cys-179. A helical membrane pass occupies residues Tyr-193 to Thr-213. Residues Thr-214 to Arg-255 lie on the Lumenal side of the membrane. A helical transmembrane segment spans residues Ile-256–Phe-276. Topologically, residues Val-277–Glu-344 are cytoplasmic. The Di-lysine motif signature appears at Lys-341–Glu-344.

Belongs to the DHHC palmitoyltransferase family. Interacts with CPT1A.

It is found in the endoplasmic reticulum membrane. The protein localises to the golgi apparatus membrane. It localises to the cell membrane. It carries out the reaction L-cysteinyl-[protein] + hexadecanoyl-CoA = S-hexadecanoyl-L-cysteinyl-[protein] + CoA. Functionally, palmitoyltransferase that catalyzes the addition of palmitate onto protein substrates including the D(2) dopamine receptor DRD2, GSK3B or MAVS. Mediates GSK3B palmitoylation to prevent its AKT1-mediated phosphorylation leading to activation of the STAT3 signaling pathway. Also catalyzes MAVS palmitoylation which promotes its stabilization and activation by inhibiting 'Lys-48'- but facilitating 'Lys-63'-linked ubiquitination. The chain is Palmitoyltransferase ZDHHC4 from Homo sapiens (Human).